A 383-amino-acid polypeptide reads, in one-letter code: Succinyl-diaminopimelate desuccinylase (383 aa).

H74 serves as a coordination point for Zn(2+). D76 is an active-site residue. D107 contributes to the Zn(2+) binding site. The Proton acceptor role is filled by E141. Zn(2+) is bound by residues E142, E170, and H356.

Belongs to the peptidase M20A family. DapE subfamily. In terms of assembly, homodimer. Zn(2+) is required as a cofactor. Requires Co(2+) as cofactor.

The enzyme catalyses N-succinyl-(2S,6S)-2,6-diaminopimelate + H2O = (2S,6S)-2,6-diaminopimelate + succinate. It participates in amino-acid biosynthesis; L-lysine biosynthesis via DAP pathway; LL-2,6-diaminopimelate from (S)-tetrahydrodipicolinate (succinylase route): step 3/3. Its function is as follows. Catalyzes the hydrolysis of N-succinyl-L,L-diaminopimelic acid (SDAP), forming succinate and LL-2,6-diaminopimelate (DAP), an intermediate involved in the bacterial biosynthesis of lysine and meso-diaminopimelic acid, an essential component of bacterial cell walls. This chain is Succinyl-diaminopimelate desuccinylase, found in Cupriavidus taiwanensis (strain DSM 17343 / BCRC 17206 / CCUG 44338 / CIP 107171 / LMG 19424 / R1) (Ralstonia taiwanensis (strain LMG 19424)).